The sequence spans 236 residues: Ureidoacrylate amidohydrolase RutB (236 aa).

The active-site Proton acceptor is the Asp24. Lys133 is a catalytic residue. The active-site Nucleophile is Cys166.

This sequence belongs to the isochorismatase family. RutB subfamily.

It carries out the reaction (Z)-3-ureidoacrylate + H2O + H(+) = (Z)-3-aminoacrylate + NH4(+) + CO2. It catalyses the reaction (Z)-3-ureidoacrylate + H2O = (Z)-3-aminoacrylate + carbamate + H(+). The catalysed reaction is (Z)-2-methylureidoacrylate + H2O + H(+) = (Z)-2-methylaminoacrylate + NH4(+) + CO2. In terms of biological role, hydrolyzes ureidoacrylate to form aminoacrylate and carbamate. The carbamate hydrolyzes spontaneously, thereby releasing one of the nitrogen atoms of the pyrimidine ring as ammonia and one of its carbon atoms as CO2. The polypeptide is Ureidoacrylate amidohydrolase RutB (Klebsiella pneumoniae (strain 342)).